Here is a 1035-residue protein sequence, read N- to C-terminus: Protein SEY1 homolog (1035 aa).

The 236-residue stretch at 32-267 folds into the GB1/RHD3-type G domain; that stretch reads DGTFICVSVF…TTLIPLTDSS (236 aa). 42–49 contacts GTP; that stretch reads GPQSSGKS.

It belongs to the TRAFAC class dynamin-like GTPase superfamily. GB1/RHD3 GTPase family. RHD3 subfamily.

Its subcellular location is the endoplasmic reticulum membrane. Probable GTP-binding protein that may be involved in cell development. The protein is Protein SEY1 homolog of Giardia intestinalis (strain ATCC 50803 / WB clone C6) (Giardia lamblia).